The following is a 379-amino-acid chain: Cobalt-precorrin-5B C(1)-methyltransferase (379 aa).

It belongs to the CbiD family.

The catalysed reaction is Co-precorrin-5B + S-adenosyl-L-methionine = Co-precorrin-6A + S-adenosyl-L-homocysteine. It participates in cofactor biosynthesis; adenosylcobalamin biosynthesis; cob(II)yrinate a,c-diamide from sirohydrochlorin (anaerobic route): step 6/10. Catalyzes the methylation of C-1 in cobalt-precorrin-5B to form cobalt-precorrin-6A. This chain is Cobalt-precorrin-5B C(1)-methyltransferase, found in Salmonella schwarzengrund (strain CVM19633).